We begin with the raw amino-acid sequence, 426 residues long: Serine/threonine-protein kinase ssn3 (426 aa).

Positions 39-368 constitute a Protein kinase domain; it reads YHIVGFISSG…AKEALEHPYF (330 aa). Residues 45–53 and Lys69 contribute to the ATP site; that span reads ISSGTYGRV. Asp171 functions as the Proton acceptor in the catalytic mechanism. Positions 389-398 are enriched in basic and acidic residues; the sequence is RRITHDDNDI. Residues 389 to 426 form a disordered region; it reads RRITHDDNDIRSGSLPGTKRSGLPDDSLMSRAAKRMKE.

It belongs to the protein kinase superfamily. CMGC Ser/Thr protein kinase family. CDC2/CDKX subfamily. As to quaternary structure, component of the srb8-11 complex, a regulatory module of the Mediator complex. Mg(2+) serves as cofactor.

The protein resides in the nucleus. The catalysed reaction is L-seryl-[protein] + ATP = O-phospho-L-seryl-[protein] + ADP + H(+). The enzyme catalyses L-threonyl-[protein] + ATP = O-phospho-L-threonyl-[protein] + ADP + H(+). It catalyses the reaction [DNA-directed RNA polymerase] + ATP = phospho-[DNA-directed RNA polymerase] + ADP + H(+). Component of the srb8-11 complex. The srb8-11 complex is a regulatory module of the Mediator complex which is itself involved in regulation of basal and activated RNA polymerase II-dependent transcription. The srb8-11 complex may be involved in the transcriptional repression of a subset of genes regulated by Mediator. It may inhibit the association of the Mediator complex with RNA polymerase II to form the holoenzyme complex. The srb8-11 complex phosphorylates the C-terminal domain (CTD) of the largest subunit of RNA polymerase II. The chain is Serine/threonine-protein kinase ssn3 (ssn3) from Emericella nidulans (strain FGSC A4 / ATCC 38163 / CBS 112.46 / NRRL 194 / M139) (Aspergillus nidulans).